We begin with the raw amino-acid sequence, 313 residues long: Ribosomal RNA small subunit methyltransferase H (313 aa).

Residues G35–H37, D55, F80, D102, and Q109 each bind S-adenosyl-L-methionine.

This sequence belongs to the methyltransferase superfamily. RsmH family.

The protein localises to the cytoplasm. The catalysed reaction is cytidine(1402) in 16S rRNA + S-adenosyl-L-methionine = N(4)-methylcytidine(1402) in 16S rRNA + S-adenosyl-L-homocysteine + H(+). Its function is as follows. Specifically methylates the N4 position of cytidine in position 1402 (C1402) of 16S rRNA. The chain is Ribosomal RNA small subunit methyltransferase H from Shewanella sp. (strain MR-7).